Here is a 157-residue protein sequence, read N- to C-terminus: Nascent polypeptide-associated complex subunit beta (157 aa).

Residues 1–28 (MPVDPEKLAKLQKSSAKKVGGSRVKAKK) are disordered. The NAC-A/B domain occupies 33-98 (EQDDTKLIEA…PQEKNITQLI (66 aa)). The tract at residues 124 to 157 (KTPKDFNTGSANAAADAGGEDIPDLVDQKFDDVE) is disordered.

The protein belongs to the NAC-beta family. In terms of assembly, part of the nascent polypeptide-associated complex (NAC), consisting of EGD2 and EGD1. NAC associates with ribosomes via EGD1.

The protein localises to the cytoplasm. It is found in the nucleus. Its function is as follows. Component of the nascent polypeptide-associated complex (NAC), a dynamic component of the ribosomal exit tunnel, protecting the emerging polypeptides from interaction with other cytoplasmic proteins to ensure appropriate nascent protein targeting. The NAC complex also promotes mitochondrial protein import by enhancing productive ribosome interactions with the outer mitochondrial membrane and blocks the inappropriate interaction of ribosomes translating non-secretory nascent polypeptides with translocation sites in the membrane of the endoplasmic reticulum. EGD1 may act as a transcription factor that exert a negative effect on the expression of several genes that are transcribed by RNA polymerase II. This is Nascent polypeptide-associated complex subunit beta (EGD1) from Candida albicans (strain SC5314 / ATCC MYA-2876) (Yeast).